The sequence spans 300 residues: Transcriptional dual regulator GltC (300 aa).

The 58-residue stretch at 1-58 folds into the HTH lysR-type domain; sequence MELRQLRYFMEVAEREHVSEAADHLHVAQSAISRQIANLEEELNVTLFEREGRNIKLT. Positions 18-37 form a DNA-binding region, H-T-H motif; the sequence is VSEAADHLHVAQSAISRQIA.

The protein belongs to the LysR transcriptional regulatory family. As to quaternary structure, interacts with gutamate dehydrogenase RocG.

Its activity is regulated as follows. Activated by alpha-ketoglutarate and inhibited by glutamate and by RocG. Positive regulator of glutamate biosynthesis (gltAB genes). Negatively regulates its own expression. The chain is Transcriptional dual regulator GltC (gltC) from Bacillus subtilis (strain 168).